The following is a 924-amino-acid chain: Translation initiation factor IF-2 (924 aa).

A disordered region spans residues 118–325; sequence PSTAHREELA…QAPVVGGVRL (208 aa). Pro residues-rich tracts occupy residues 150-173 and 192-201; these read APHPGHPGMPTGPHPGPAPKPGGR and IPRPPAPRPS. Residues 202-212 show a composition bias toward low complexity; that stretch reads ASPSSMSPRPG. Residues 229–295 are compositionally biased toward gly residues; it reads RPGGGRPGAP…GAAGAFGRPG (67 aa). Residues 299 to 308 show a composition bias toward basic residues; the sequence is RRGRKSKRQK. The tr-type G domain occupies 420–591; sequence VRPPVVTVMG…AVLLTADAAL (172 aa). The G1 stretch occupies residues 429–436; sequence GHVDHGKT. 429-436 provides a ligand contact to GTP; the sequence is GHVDHGKT. The tract at residues 454-458 is G2; the sequence is GITQH. Positions 479 to 482 are G3; the sequence is DTPG. GTP contacts are provided by residues 479–483 and 533–536; these read DTPGH and NKID. The G4 stretch occupies residues 533 to 536; sequence NKID. The interval 569–571 is G5; sequence SAK.

The protein belongs to the TRAFAC class translation factor GTPase superfamily. Classic translation factor GTPase family. IF-2 subfamily.

It localises to the cytoplasm. Functionally, one of the essential components for the initiation of protein synthesis. Protects formylmethionyl-tRNA from spontaneous hydrolysis and promotes its binding to the 30S ribosomal subunits. Also involved in the hydrolysis of GTP during the formation of the 70S ribosomal complex. In Mycobacterium leprae (strain Br4923), this protein is Translation initiation factor IF-2.